A 256-amino-acid chain; its full sequence is 5'-nucleotidase YutF (256 aa).

Belongs to the HAD-like hydrolase superfamily. NagD family. As to quaternary structure, homodimer. The cofactor is Mg(2+).

The protein resides in the cytoplasm. The catalysed reaction is a ribonucleoside 5'-phosphate + H2O = a ribonucleoside + phosphate. The enzyme catalyses XMP + H2O = xanthosine + phosphate. In terms of biological role, catalyzes the hydrolysis of various purine and pyrimidine 5'-nucleotides, showing preference for 5'-nucleoside monophosphates and exhibiting the highest catalytic activity toward 5'-XMP. Also shows a relatively high phosphohydrolase activity toward the nucleotide precursors ribose-5-phosphate (R5P) and 5-phosphoribosyl-1-pyrophosphate (PRPP), and toward the non-natural substrate p-nitrophenyl phosphate (pNPP). This is 5'-nucleotidase YutF (yutF) from Bacillus subtilis (strain 168).